The primary structure comprises 246 residues: MRVGIVGCSGRMGTLLSVLLSSTTRFTLGPGYSRKGAHSLASVIENNDVLVDFSSSSFSEELLSALLSNPKPLIFATTKPIASCSIDEKLERLAVHVPVVVCPNTSLGAYVQKRLAALLARVFDDTYDIRVAEVHHRHKRDPISGTANELVSVLCDAKQKEWNQEYSVGTNCNNVKNIELHASRVGNVSGEHEVAFISDKEQIVLKHTVFSREVFAEGTLRILDWLIDSSPPPGYYGPEVGLKVSV.

7–12 (GCSGRM) lines the NAD(+) pocket. NADP(+) is bound at residue arginine 34. NAD(+) is bound by residues 76–78 (ATT) and 102–105 (CPNT). The Proton donor/acceptor role is filled by histidine 135. Position 136 (histidine 136) interacts with (S)-2,3,4,5-tetrahydrodipicolinate. Lysine 139 acts as the Proton donor in catalysis. 145–146 (GT) contributes to the (S)-2,3,4,5-tetrahydrodipicolinate binding site.

It belongs to the DapB family.

The protein resides in the cytoplasm. The catalysed reaction is (S)-2,3,4,5-tetrahydrodipicolinate + NAD(+) + H2O = (2S,4S)-4-hydroxy-2,3,4,5-tetrahydrodipicolinate + NADH + H(+). It carries out the reaction (S)-2,3,4,5-tetrahydrodipicolinate + NADP(+) + H2O = (2S,4S)-4-hydroxy-2,3,4,5-tetrahydrodipicolinate + NADPH + H(+). The protein operates within amino-acid biosynthesis; L-lysine biosynthesis via DAP pathway; (S)-tetrahydrodipicolinate from L-aspartate: step 4/4. Catalyzes the conversion of 4-hydroxy-tetrahydrodipicolinate (HTPA) to tetrahydrodipicolinate. The chain is 4-hydroxy-tetrahydrodipicolinate reductase from Chlamydia felis (strain Fe/C-56) (Chlamydophila felis).